We begin with the raw amino-acid sequence, 151 residues long: Arginine repressor (151 aa).

Belongs to the ArgR family.

It localises to the cytoplasm. The protein operates within amino-acid biosynthesis; L-arginine biosynthesis [regulation]. Its function is as follows. Regulates arginine biosynthesis genes. The protein is Arginine repressor of Heliobacterium modesticaldum (strain ATCC 51547 / Ice1).